Consider the following 720-residue polypeptide: MALTTFSISRGGFVGALPQEGHFAPAAAELSLHKLQSRPHKARRRSSSSISASLSTEREAAEYHSQRPPTPLLDTVNYPIHMKNLSLKELQQLADELRSDVIFHVSKTGGHLGSSLGVVELTVALHYVFNTPQDKILWDVGHQSYPHKILTGRRDKMPTMRQTNGLSGFTKRSESEYDSFGTGHSSTTISAALGMAVGRDLKGGKNNVVAVIGDGAMTAGQAYEAMNNAGYLDSDMIVILNDNKQVSLPTATLDGPAPPVGALSSALSKLQSSRPLRELREVAKGVTKQIGGSVHELAAKVDEYARGMISGSGSTLFEELGLYYIGPVDGHNIDDLITILREVKSTKTTGPVLIHVVTEKGRGYPYAERAADKYHGVAKFDPATGKQFKSPAKTLSYTNYFAEALIAEAEQDNRVVAIHAAMGGGTGLNYFLRRFPNRCFDVGIAEQHAVTFAAGLACEGLKPFCAIYSSFLQRGYDQVVHDVDLQKLPVRFAMDRAGLVGADGPTHCGAFDVTYMACLPNMVVMAPSDEAELCHMVATAAAIDDRPSCFRYPRGNGIGVPLPPNYKGVPLEVGKGRVLLEGERVALLGYGSAVQYCLAAASLVERHGLKVTVADARFCKPLDQTLIRRLASSHEVLLTVEEGSIGGFGSHVAQFMALDGLLDGKLKWRPLVLPDRYIDHGSPADQLAEAGLTPSHIAATVFNVLGQAREALAIMTVPNA.

Residues Met1–Ser51 constitute a chloroplast transit peptide. A compositionally biased stretch (basic residues) spans Leu35–Ser46. The tract at residues Leu35–Asp74 is disordered. Over residues Thr56–Ser65 the composition is skewed to basic and acidic residues. Residues His142 and Gly183–Ser185 each bind thiamine diphosphate. Asp214 is a Mg(2+) binding site. Thiamine diphosphate is bound by residues Gly215 to Ala216, Asn243, Tyr364, and Glu446. Asn243 is a Mg(2+) binding site.

The protein belongs to the transketolase family. DXPS subfamily. Homodimer. Mg(2+) serves as cofactor. It depends on thiamine diphosphate as a cofactor.

It localises to the plastid. The protein resides in the chloroplast stroma. It carries out the reaction D-glyceraldehyde 3-phosphate + pyruvate + H(+) = 1-deoxy-D-xylulose 5-phosphate + CO2. It functions in the pathway metabolic intermediate biosynthesis; 1-deoxy-D-xylulose 5-phosphate biosynthesis; 1-deoxy-D-xylulose 5-phosphate from D-glyceraldehyde 3-phosphate and pyruvate: step 1/1. Its function is as follows. Catalyzes the acyloin condensation reaction between C atoms 2 and 3 of pyruvate and glyceraldehyde 3-phosphate to yield 1-deoxy-D-xylulose-5-phosphate (DXP). Is a limiting enzyme for plastidic isoprenoid biosynthesis and essential for chloroplast development. The protein is 1-deoxy-D-xylulose-5-phosphate synthase 1, chloroplastic (CLA1) of Oryza sativa subsp. japonica (Rice).